A 295-amino-acid chain; its full sequence is Spermatogenesis-associated protein 4 (295 aa).

Positions 1–34 are disordered; it reads MAAAGQAEECLPLPAAESSKTSLPTPPAVPAGKK. A Calponin-homology (CH) domain is found at 48–154; it reads SRLSRSVLRW…QEIYTLLTHQ (107 aa). The segment at 251–295 is disordered; it reads KRRYKSRGSKEKAAQPLSKSDNDGNARKEIHVKQSGNPCENTENL. A compositionally biased stretch (basic and acidic residues) spans 270–282; the sequence is SDNDGNARKEIHV. The span at 284 to 295 shows a compositional bias: polar residues; it reads QSGNPCENTENL.

As to expression, testis.

Its subcellular location is the nucleus. Its function is as follows. May play a role in apoptosis regulation. The polypeptide is Spermatogenesis-associated protein 4 (Spata4) (Mus musculus (Mouse)).